Reading from the N-terminus, the 95-residue chain is Large ribosomal subunit protein uL23 (95 aa).

The protein belongs to the universal ribosomal protein uL23 family. In terms of assembly, part of the 50S ribosomal subunit. Contacts protein L29, and trigger factor when it is bound to the ribosome.

Functionally, one of the early assembly proteins it binds 23S rRNA. One of the proteins that surrounds the polypeptide exit tunnel on the outside of the ribosome. Forms the main docking site for trigger factor binding to the ribosome. In Desulforudis audaxviator (strain MP104C), this protein is Large ribosomal subunit protein uL23.